Reading from the N-terminus, the 158-residue chain is SH3 domain-binding glutamic acid-rich protein homolog (158 aa).

The span at 40–51 (TEPGKESEKELM) shows a compositional bias: basic and acidic residues. The tract at residues 40–74 (TEPGKESEKELMQNKSTSNGGTVSDPEPRHPLPPQ) is disordered. A compositionally biased stretch (polar residues) spans 52–61 (QNKSTSNGGT). The SH3-binding motif lies at 67–73 (PRHPLPP). The residue at position 109 (threonine 109) is a Phosphothreonine. The segment at 118-158 (LKQENGDAKKEEAETEAEDKKTEAGDGDVDVKEEAAEKAEV) is disordered.

The protein belongs to the SH3BGR family.

The polypeptide is SH3 domain-binding glutamic acid-rich protein homolog (Sh3beta) (Drosophila melanogaster (Fruit fly)).